The following is a 562-amino-acid chain: MENQRIFLFLALSILGLLLWTSWERDTRAPVATEEVVEAEDDVPAPAETPDEAPDPADGETPARDRAEVEDERRVRVVTDLMDLEISTRGGDIRRVDLLQHGTTATDDTPFRLMADDRDPLFIAQTGLIDDSDNRPDHRALFRAERDEYRLSEGEDEIQVRLTWADENRGIEVARVYTVQRDSYVIDVRHQVRNAGDEEWRGYSYFQLRRNPDPPGTTPWYIYTFTGGSIYSPDDRFEKISFDDMDDTSLSRDIRDGWAAMIQHYFLGAWIPPESQALRYYTRAQAGNEYVLGMSSGRQTVQPGGEAEFVNRLFVGPKEQDRLRELHDSMTLSVDYGFLTVLAKPLFWLLDNIQDIVGNWGVAIILVTLLIKLAFYKLSATSYRSMAKMRRVQPRMQQLKERHGDDKQALNQAMMELYKKEKINPLGGCLPILVQIPVFIALYWVLLESVELRHAPFMLWIQDLSSRDPYFVLPLLMGATMFLQQRLNPAPLDPIQQRIMMALPIVFTGFFMLFPAGLVLYWLVNNGLSIAQQWYIMRNLEAIEAGKAAKSGKADKDQKKKD.

Residues 4–24 (QRIFLFLALSILGLLLWTSWE) traverse the membrane as a helical segment. The interval 33–71 (TEEVVEAEDDVPAPAETPDEAPDPADGETPARDRAEVED) is disordered. Positions 35 to 58 (EVVEAEDDVPAPAETPDEAPDPAD) are enriched in acidic residues. A compositionally biased stretch (basic and acidic residues) spans 61–71 (TPARDRAEVED). A run of 4 helical transmembrane segments spans residues 330 to 350 (MTLS…FWLL), 356 to 376 (IVGN…LAFY), 426 to 446 (LGGC…YWVL), and 499 to 519 (IMMA…AGLV).

The protein belongs to the OXA1/ALB3/YidC family. Type 1 subfamily. Interacts with the Sec translocase complex via SecD. Specifically interacts with transmembrane segments of nascent integral membrane proteins during membrane integration.

The protein localises to the cell inner membrane. Functionally, required for the insertion and/or proper folding and/or complex formation of integral membrane proteins into the membrane. Involved in integration of membrane proteins that insert both dependently and independently of the Sec translocase complex, as well as at least some lipoproteins. Aids folding of multispanning membrane proteins. The sequence is that of Membrane protein insertase YidC from Alkalilimnicola ehrlichii (strain ATCC BAA-1101 / DSM 17681 / MLHE-1).